A 453-amino-acid chain; its full sequence is Na(+)/H(+) antiporter NhaA (453 aa).

11 helical membrane-spanning segments follow: residues 27-47 (FLHI…SALI), 78-98 (LHFW…GMEI), 114-134 (ILPI…YFIF), 143-163 (GWAV…ALLG), 172-192 (IILL…IAFF), 201-221 (GLLI…IGLA), 222-242 (SAWL…VTGV), 316-336 (PWVA…VSFA), 346-366 (FLIV…GIIT), 385-405 (WAGI…SIFV), and 421-441 (IGVL…GFIY).

The protein belongs to the NhaA Na(+)/H(+) (TC 2.A.33) antiporter family.

It is found in the cell inner membrane. It catalyses the reaction Na(+)(in) + 2 H(+)(out) = Na(+)(out) + 2 H(+)(in). Functionally, na(+)/H(+) antiporter that extrudes sodium in exchange for external protons. The polypeptide is Na(+)/H(+) antiporter NhaA (Bartonella tribocorum (strain CIP 105476 / IBS 506)).